We begin with the raw amino-acid sequence, 102 residues long: Small ribosomal subunit protein uS10 (102 aa).

It belongs to the universal ribosomal protein uS10 family. Part of the 30S ribosomal subunit.

Its function is as follows. Involved in the binding of tRNA to the ribosomes. The protein is Small ribosomal subunit protein uS10 of Coprothermobacter proteolyticus (strain ATCC 35245 / DSM 5265 / OCM 4 / BT).